A 244-amino-acid chain; its full sequence is 6-carboxyhexanoate--CoA ligase (244 aa).

It belongs to the BioW family. In terms of assembly, homodimer. The cofactor is Mg(2+).

The catalysed reaction is heptanedioate + ATP + CoA = 6-carboxyhexanoyl-CoA + AMP + diphosphate. It participates in metabolic intermediate metabolism; pimeloyl-CoA biosynthesis; pimeloyl-CoA from pimelate: step 1/1. Catalyzes the transformation of pimelate into pimeloyl-CoA with concomitant hydrolysis of ATP to AMP. This is 6-carboxyhexanoate--CoA ligase from Hydrogenobacter thermophilus (strain DSM 6534 / IAM 12695 / TK-6).